The following is a 1103-amino-acid chain: Isoleucine--tRNA ligase (1103 aa).

Residues 1 to 25 form a disordered region; that stretch reads MSENVYPKANEGGETAHVAPNPSFP. The 'HIGH' region signature appears at 65–75; that stretch reads PFANGLPHYGH. The short motif at 649–653 is the 'KMSKS' region element; it reads KMSKH. Residue K652 coordinates ATP.

It belongs to the class-I aminoacyl-tRNA synthetase family. IleS type 2 subfamily. In terms of assembly, monomer. Zn(2+) serves as cofactor.

The protein localises to the cytoplasm. It carries out the reaction tRNA(Ile) + L-isoleucine + ATP = L-isoleucyl-tRNA(Ile) + AMP + diphosphate. Functionally, catalyzes the attachment of isoleucine to tRNA(Ile). As IleRS can inadvertently accommodate and process structurally similar amino acids such as valine, to avoid such errors it has two additional distinct tRNA(Ile)-dependent editing activities. One activity is designated as 'pretransfer' editing and involves the hydrolysis of activated Val-AMP. The other activity is designated 'posttransfer' editing and involves deacylation of mischarged Val-tRNA(Ile). This chain is Isoleucine--tRNA ligase, found in Bifidobacterium longum (strain NCC 2705).